Consider the following 276-residue polypeptide: Diaminopimelate epimerase (276 aa).

3 residues coordinate substrate: Asn13, Gln46, and Asn66. The Proton donor role is filled by Cys75. Substrate contacts are provided by residues Gly76 to Asn77, Asn159, Asn192, and Glu210 to Arg211. The active-site Proton acceptor is the Cys219. A substrate-binding site is contributed by Gly220–Thr221.

It belongs to the diaminopimelate epimerase family. Homodimer.

It is found in the cytoplasm. The catalysed reaction is (2S,6S)-2,6-diaminopimelate = meso-2,6-diaminopimelate. Its pathway is amino-acid biosynthesis; L-lysine biosynthesis via DAP pathway; DL-2,6-diaminopimelate from LL-2,6-diaminopimelate: step 1/1. Functionally, catalyzes the stereoinversion of LL-2,6-diaminopimelate (L,L-DAP) to meso-diaminopimelate (meso-DAP), a precursor of L-lysine and an essential component of the bacterial peptidoglycan. This chain is Diaminopimelate epimerase, found in Pseudoalteromonas translucida (strain TAC 125).